We begin with the raw amino-acid sequence, 825 residues long: Translation initiation factor IF-2 (825 aa).

Composition is skewed to basic and acidic residues over residues methionine 1–lysine 19, arginine 35–arginine 45, leucine 70–lysine 98, and lysine 113–alanine 122. The disordered stretch occupies residues methionine 1 to glutamate 239. The segment covering proline 158–serine 169 has biased composition (low complexity). The span at glycine 181–arginine 191 shows a compositional bias: basic residues. A compositionally biased stretch (polar residues) spans glutamine 194–arginine 208. A compositionally biased stretch (basic residues) spans glutamine 211–glutamine 220. Positions valine 326–lysine 495 constitute a tr-type G domain. The segment at glycine 335–threonine 342 is G1. A GTP-binding site is contributed by glycine 335–threonine 342. A G2 region spans residues glycine 360–asparagine 364. Residues aspartate 381–glycine 384 form a G3 region. Residues aspartate 381 to histidine 385 and asparagine 435 to aspartate 438 contribute to the GTP site. A G4 region spans residues asparagine 435–aspartate 438. The G5 stretch occupies residues serine 471 to lysine 473.

This sequence belongs to the TRAFAC class translation factor GTPase superfamily. Classic translation factor GTPase family. IF-2 subfamily.

The protein resides in the cytoplasm. One of the essential components for the initiation of protein synthesis. Protects formylmethionyl-tRNA from spontaneous hydrolysis and promotes its binding to the 30S ribosomal subunits. Also involved in the hydrolysis of GTP during the formation of the 70S ribosomal complex. The chain is Translation initiation factor IF-2 from Lactobacillus delbrueckii subsp. bulgaricus (strain ATCC BAA-365 / Lb-18).